Consider the following 397-residue polypeptide: Succinate--CoA ligase [ADP-forming] subunit beta (397 aa).

The 246-residue stretch at 9–254 folds into the ATP-grasp domain; it reads KALLAQYGAP…ETEEDPKELA (246 aa). ATP is bound by residues lysine 46, 53–55, glutamate 109, serine 112, and glutamate 117; that span reads GRG. Mg(2+)-binding residues include asparagine 209 and aspartate 223. Substrate is bound by residues asparagine 274 and 331–333; that span reads GIM.

Belongs to the succinate/malate CoA ligase beta subunit family. As to quaternary structure, heterotetramer of two alpha and two beta subunits. Requires Mg(2+) as cofactor.

The catalysed reaction is succinate + ATP + CoA = succinyl-CoA + ADP + phosphate. It carries out the reaction GTP + succinate + CoA = succinyl-CoA + GDP + phosphate. The protein operates within carbohydrate metabolism; tricarboxylic acid cycle; succinate from succinyl-CoA (ligase route): step 1/1. Its function is as follows. Succinyl-CoA synthetase functions in the citric acid cycle (TCA), coupling the hydrolysis of succinyl-CoA to the synthesis of either ATP or GTP and thus represents the only step of substrate-level phosphorylation in the TCA. The beta subunit provides nucleotide specificity of the enzyme and binds the substrate succinate, while the binding sites for coenzyme A and phosphate are found in the alpha subunit. The protein is Succinate--CoA ligase [ADP-forming] subunit beta of Jannaschia sp. (strain CCS1).